Reading from the N-terminus, the 210-residue chain is MTHGDNRDGPGRETRSSGPLVLASASPRRVDLLAQIGLVPDAIDPADLDETPAADELPRPYAERVARAKALAVAPRHPGAWVLAGDTVVARGRRILPKAEDAKTAKTCLEMLSGARHRVIGAIALVTPEGRLIERSVVSQVAFKRLSAAEIAEYLAGDEWRGKAGGYAIQGRAAAFVRWLEGSHSNVVGLPLFETNALLAGTGYRPGRDG.

Positions 1–15 are enriched in basic and acidic residues; sequence MTHGDNRDGPGRETR. Positions 1–22 are disordered; the sequence is MTHGDNRDGPGRETRSSGPLVL. Asp86 acts as the Proton acceptor in catalysis.

Belongs to the Maf family. YhdE subfamily. It depends on a divalent metal cation as a cofactor.

Its subcellular location is the cytoplasm. The catalysed reaction is dTTP + H2O = dTMP + diphosphate + H(+). It catalyses the reaction UTP + H2O = UMP + diphosphate + H(+). Nucleoside triphosphate pyrophosphatase that hydrolyzes dTTP and UTP. May have a dual role in cell division arrest and in preventing the incorporation of modified nucleotides into cellular nucleic acids. This is dTTP/UTP pyrophosphatase from Rhodospirillum rubrum (strain ATCC 11170 / ATH 1.1.1 / DSM 467 / LMG 4362 / NCIMB 8255 / S1).